The chain runs to 271 residues: Proteasome inhibitor PI31 subunit (271 aa).

N-acetylalanine is present on A2. Residues 2–150 (AGLEVLFASA…PIHEQWEKVR (149 aa)) are important for homodimerization and interaction with FBXO7. S153 and S189 each carry phosphoserine. An Omega-N-methylarginine modification is found at R205. Position 219 is an asymmetric dimethylarginine (R219). The interval 221–271 (LIDPSSGLPNRLPPGAVPPGARFDPFGPIGTSPSGPNPDHLPPPGYDDMYL) is disordered. R231 is subject to Omega-N-methylarginine. At S252 the chain carries Phosphoserine. Over residues 255–265 (GPNPDHLPPPG) the composition is skewed to pro residues.

This sequence belongs to the proteasome inhibitor PI31 family. In terms of assembly, monomer and homodimer. Interacts with FBXO7.

Its subcellular location is the cytoplasm. It is found in the endoplasmic reticulum. Functionally, plays an important role in control of proteasome function. Inhibits the hydrolysis of protein and peptide substrates by the 20S proteasome. Also inhibits the activation of the proteasome by the proteasome regulatory proteins PA700 and PA28. This Rattus norvegicus (Rat) protein is Proteasome inhibitor PI31 subunit (Psmf1).